Reading from the N-terminus, the 492-residue chain is UTP--glucose-1-phosphate uridylyltransferase (492 aa).

UTP is bound by residues 110–113 (LNGG), Lys124, Gln183, and Gly210. 112 to 113 (GG) is a binding site for substrate. Residue Lys124 coordinates Mg(2+). Substrate contacts are provided by residues His211 and 239-241 (NID). Asp241 and Lys379 together coordinate UTP. Asp241 contributes to the Mg(2+) binding site. The active site involves Lys379. The oligomerization stretch occupies residues 441 to 492 (VLTVSGNVLFGKNVVLKGTVIILADEKSKICVPDGSVLEDNIIYGNLPIIDH).

This sequence belongs to the UDPGP type 1 family. In terms of assembly, homooctamer.

The catalysed reaction is alpha-D-glucose 1-phosphate + UTP + H(+) = UDP-alpha-D-glucose + diphosphate. In terms of biological role, plays a central role as a glucosyl donor in cellular metabolic pathways. The sequence is that of UTP--glucose-1-phosphate uridylyltransferase (UGP1) from Encephalitozoon cuniculi (strain GB-M1) (Microsporidian parasite).